Consider the following 509-residue polypeptide: Protein MAIN-LIKE 1 (509 aa).

Residues 477-509 (GYGKRRRRNEHTPTPNNGGGNDISSLLLQKEDS) are disordered. The segment covering 488-503 (TPTPNNGGGNDISSLL) has biased composition (polar residues).

Expressed in root tips, the shoot apical meristem (SAM), leaves, mature flowers and embryos.

It is found in the nucleus. Functionally, acts as an important factor for cell fate determination and maintenance throughout plant development. Required for the organization of the root apical meristem (RAM) and the shoot apical meristem (SAM). Required to maintain genome stability and cell division activity in meristematic cells. The protein is Protein MAIN-LIKE 1 of Arabidopsis thaliana (Mouse-ear cress).